The following is a 327-amino-acid chain: Protein CONSERVED IN THE GREEN LINEAGE AND DIATOMS 27, chloroplastic (327 aa).

A chloroplast-targeting transit peptide spans 1–59 (MLRLIVNYPLIPKISHRVCSNSSSKLGSYYDSSSIIKYGGISDVVGKKQELFLSVSVKA). A disordered region spans residues 66–88 (NGGGSMSFSGQSWDPSSEIEVPS). Transmembrane regions (helical) follow at residues 119–139 (LGGL…AASF), 148–168 (FILA…LRIY), and 225–245 (LIGT…ATPV).

Mostly expressed in seeds, leaves and flowers, and, to a lower extent, in roots.

It localises to the membrane. Its subcellular location is the plastid. The protein localises to the chloroplast. Required for growth in low iron conditions. The protein is Protein CONSERVED IN THE GREEN LINEAGE AND DIATOMS 27, chloroplastic of Arabidopsis thaliana (Mouse-ear cress).